Here is a 1207-residue protein sequence, read N- to C-terminus: Chromosomal serine/threonine-protein kinase JIL-1 (1207 aa).

Residues Met-1–Arg-19 are compositionally biased toward polar residues. Disordered stretches follow at residues Met-1–Arg-119, Gln-164–Leu-183, and Ser-210–Asp-230. Residues Ser-29 and Ser-31 each carry the phosphoserine modification. The segment covering Leu-45–Gly-69 has biased composition (polar residues). Residues Asn-88–Asn-97 show a composition bias toward low complexity. Residues Ser-98–Asn-108 show a composition bias toward polar residues. The span at Ser-109–Ala-118 shows a compositional bias: low complexity. Residues Gln-164–Glu-178 show a composition bias toward acidic residues. Positions Thr-213 to Pro-226 are enriched in polar residues. In terms of domain architecture, Protein kinase 1 spans Phe-261–Phe-530. ATP contacts are provided by residues Leu-267–Val-275 and Lys-293. Catalysis depends on Asp-389, which acts as the Proton acceptor. The residue at position 424 (Ser-424) is a Phosphoserine. Residues Asn-531–Arg-599 form the AGC-kinase C-terminal domain. Thr-588 is subject to Phosphothreonine. The Protein kinase 2 domain occupies Leu-623–Leu-886. Residues Thr-629–Cys-637 and Lys-652 contribute to the ATP site. Asp-739 functions as the Proton acceptor in the catalytic mechanism. Thr-1045 carries the post-translational modification Phosphothreonine. At Ser-1047 the chain carries Phosphoserine. A disordered region spans residues Thr-1168–Ala-1197.

Belongs to the protein kinase superfamily. Ser/Thr protein kinase family. Interacts with lola. Interacts with proteins of the male specific lethal (MSL) dosage compensation complex; this interaction is mediated by the kinase domains. The cofactor is Mg(2+). Post-translationally, autophosphorylated in vitro.

It is found in the nucleus. It localises to the chromosome. The catalysed reaction is L-seryl-[protein] + ATP = O-phospho-L-seryl-[protein] + ADP + H(+). The enzyme catalyses L-threonyl-[protein] + ATP = O-phospho-L-threonyl-[protein] + ADP + H(+). Its function is as follows. Phosphorylates 'Ser-10' of histone H3. May regulate gene expression by establishing or maintaining the structure of more open chromatin regions. Also required for normal polytene chromosome structure, for oogenesis and for viability throughout development. Regulates the structure of polytene chromosomes in salivary glands. May phosphorylate 'Ser-1' of histone H2A. The polypeptide is Chromosomal serine/threonine-protein kinase JIL-1 (Drosophila melanogaster (Fruit fly)).